The sequence spans 457 residues: Beta-1,4-mannosyltransferase egh (457 aa).

6 consecutive transmembrane segments (helical) span residues 8-28, 35-55, 57-77, 346-366, 378-398, and 415-435; these read LLHCTLLITVIVTFEVFSGGI, FTLVDPWTEYGQLATVLLYLL, FLTLLTLPQVLFNFCGLVFYN, LLGISVYSWVTMPLSTSNIIF, VDFVCAFIAAINIYMYVFGVI, and VLGAVCTIPVNVVIENVAVIW.

This sequence belongs to the glycosyltransferase 2 family.

The protein resides in the membrane. Glycosyltransferase with a proposed role in glycosphingolipid biosynthesis. Neurogenic protein implicated in epithelial development. Critical component of a differential oocyte-follicle cell adhesive system. This Drosophila melanogaster (Fruit fly) protein is Beta-1,4-mannosyltransferase egh (egh).